Consider the following 413-residue polypeptide: Ribosomal RNA large subunit methyltransferase G (413 aa).

The interval 389–413 is disordered; that stretch reads EAEVEQAFDTETPHPQSALYGKPKA.

Belongs to the methyltransferase superfamily. RlmG family.

The protein localises to the cytoplasm. The catalysed reaction is guanosine(1835) in 23S rRNA + S-adenosyl-L-methionine = N(2)-methylguanosine(1835) in 23S rRNA + S-adenosyl-L-homocysteine + H(+). Its function is as follows. Specifically methylates the guanine in position 1835 (m2G1835) of 23S rRNA. This is Ribosomal RNA large subunit methyltransferase G from Shewanella pealeana (strain ATCC 700345 / ANG-SQ1).